We begin with the raw amino-acid sequence, 283 residues long: Pantothenate synthetase (283 aa).

Residue 26–33 (MGNLHEGH) coordinates ATP. Residue His33 is the Proton donor of the active site. Position 57 (Gln57) interacts with (R)-pantoate. Gln57 serves as a coordination point for beta-alanine. Residue 148-151 (GKKD) participates in ATP binding. A (R)-pantoate-binding site is contributed by Gln154. 185–188 (LSSR) is a binding site for ATP.

This sequence belongs to the pantothenate synthetase family. Homodimer.

The protein localises to the cytoplasm. It catalyses the reaction (R)-pantoate + beta-alanine + ATP = (R)-pantothenate + AMP + diphosphate + H(+). Its pathway is cofactor biosynthesis; (R)-pantothenate biosynthesis; (R)-pantothenate from (R)-pantoate and beta-alanine: step 1/1. In terms of biological role, catalyzes the condensation of pantoate with beta-alanine in an ATP-dependent reaction via a pantoyl-adenylate intermediate. The polypeptide is Pantothenate synthetase (Polaromonas naphthalenivorans (strain CJ2)).